The following is a 356-amino-acid chain: tRNA-specific 2-thiouridylase MnmA 1 (356 aa).

ATP contacts are provided by residues 8 to 15 (GMSGGVDS) and M34. The Nucleophile role is filled by C103. Cysteines 103 and 199 form a disulfide. G127 contributes to the ATP binding site. The tract at residues 149 to 151 (KDQ) is interaction with tRNA. C199 acts as the Cysteine persulfide intermediate in catalysis. The segment at 305–306 (RY) is interaction with tRNA.

This sequence belongs to the MnmA/TRMU family.

The protein resides in the cytoplasm. The enzyme catalyses S-sulfanyl-L-cysteinyl-[protein] + uridine(34) in tRNA + AH2 + ATP = 2-thiouridine(34) in tRNA + L-cysteinyl-[protein] + A + AMP + diphosphate + H(+). Functionally, catalyzes the 2-thiolation of uridine at the wobble position (U34) of tRNA, leading to the formation of s(2)U34. The chain is tRNA-specific 2-thiouridylase MnmA 1 from Clostridium botulinum (strain ATCC 19397 / Type A).